Reading from the N-terminus, the 126-residue chain is Methylglyoxal synthase (126 aa).

The MGS-like domain occupies 1–126 (MEKKIALIAH…LIKGLESLIF (126 aa)). Substrate-binding positions include His-10, Lys-14, 36–39 (TGTT), and 56–57 (SG). Asp-62 functions as the Proton donor/acceptor in the catalytic mechanism. Residue His-89 participates in substrate binding.

The protein belongs to the methylglyoxal synthase family.

The enzyme catalyses dihydroxyacetone phosphate = methylglyoxal + phosphate. In terms of biological role, catalyzes the formation of methylglyoxal from dihydroxyacetone phosphate. This Borreliella burgdorferi (strain ATCC 35210 / DSM 4680 / CIP 102532 / B31) (Borrelia burgdorferi) protein is Methylglyoxal synthase.